The following is a 183-amino-acid chain: MKNLFSLLKLTVFTLILFAVIYPLAIYGIAKLAPNQGKGETISVNGKVVGYQKIGQKFDKSNYFWGRPSAVDYNAAGSAGSNKGPSNADYLALVQKRIDTLLLVHPYLKKSDIPVDMVTASGSGLDPNISPQGALIQVKRIAKERMLDEAKVKSLVESKINTAVVGPETVNVLELNVALDQLK.

The chain crosses the membrane as a helical span at residues 10–30; the sequence is LTVFTLILFAVIYPLAIYGIA.

This sequence belongs to the KdpC family. As to quaternary structure, the system is composed of three essential subunits: KdpA, KdpB and KdpC.

The protein resides in the cell inner membrane. Functionally, part of the high-affinity ATP-driven potassium transport (or Kdp) system, which catalyzes the hydrolysis of ATP coupled with the electrogenic transport of potassium into the cytoplasm. This subunit acts as a catalytic chaperone that increases the ATP-binding affinity of the ATP-hydrolyzing subunit KdpB by the formation of a transient KdpB/KdpC/ATP ternary complex. In Flavobacterium johnsoniae (strain ATCC 17061 / DSM 2064 / JCM 8514 / BCRC 14874 / CCUG 350202 / NBRC 14942 / NCIMB 11054 / UW101) (Cytophaga johnsonae), this protein is Potassium-transporting ATPase KdpC subunit.